We begin with the raw amino-acid sequence, 224 residues long: Tumor protein D52 (224 aa).

Residues 29 to 53 are disordered; it reads LSPSGNTSPPGSPTQNVGLLKTEPV. Thr35 carries the phosphothreonine modification. Ser36 and Ser40 each carry phosphoserine. Residues 61–113 are a coiled coil; the sequence is VTMLSAPEALTEEEQEELRRELTKVEEEIQTLSQVLAAKEKHLAELKRKLGIS. Residues Thr138, Ser175, and Ser223 each carry the phosphoserine modification. The segment at 186–224 is disordered; the sequence is KVGGAKPAGGDFGEVLNSTANATSTMTTEPPPEQMTESP. Over residues 202–224 the composition is skewed to low complexity; the sequence is NSTANATSTMTTEPPPEQMTESP.

This sequence belongs to the TPD52 family. Forms a homodimer or heterodimer with other members of the family. In terms of tissue distribution, isoform 2 is expressed at higher levels in kidney and brain than in liver, lung, testis and heart. Within the brain, isoform 2 is highly expressed in the granular layer of the cerebellum, the cortex and the hippocampus. In embryos, isoform 2 is expressed in the epithelium of the developing intestine, stomach, olfactory epithelium, neuronal layers of the retina, salivary gland, kidney and dorsal root ganglion.

This is Tumor protein D52 (Tpd52) from Mus musculus (Mouse).